A 324-amino-acid chain; its full sequence is Beta-ketoacyl-[acyl-carrier-protein] synthase III (324 aa).

Catalysis depends on residues cysteine 112 and histidine 251. The interval 252–256 (QANLR) is ACP-binding. Residue asparagine 281 is part of the active site.

This sequence belongs to the thiolase-like superfamily. FabH family. In terms of assembly, homodimer.

Its subcellular location is the cytoplasm. It carries out the reaction malonyl-[ACP] + acetyl-CoA + H(+) = 3-oxobutanoyl-[ACP] + CO2 + CoA. The protein operates within lipid metabolism; fatty acid biosynthesis. Catalyzes the condensation reaction of fatty acid synthesis by the addition to an acyl acceptor of two carbons from malonyl-ACP. Catalyzes the first condensation reaction which initiates fatty acid synthesis and may therefore play a role in governing the total rate of fatty acid production. Possesses both acetoacetyl-ACP synthase and acetyl transacylase activities. Its substrate specificity determines the biosynthesis of branched-chain and/or straight-chain of fatty acids. In Clostridium perfringens (strain SM101 / Type A), this protein is Beta-ketoacyl-[acyl-carrier-protein] synthase III.